The chain runs to 396 residues: Putative isochorismate synthase (396 aa).

Belongs to the isochorismate synthase family.

It catalyses the reaction chorismate = isochorismate. It functions in the pathway siderophore biosynthesis; amonabactin biosynthesis. Involved in the synthesis of amonabactin, a phenolate siderophore containing 2,3-dihydroxybenzoic acid (2,3-DHB). This chain is Putative isochorismate synthase (amoA), found in Aeromonas hydrophila.